A 318-amino-acid polypeptide reads, in one-letter code: Olfactory receptor 10H1 (318 aa).

Topologically, residues 1–25 (MQRANHSTVTQFILVGFSVFPHLQL) are extracellular. N-linked (GlcNAc...) asparagine glycosylation is present at N5. Residues 26-46 (MLFLLFLLMYLFTLLGNLLIM) form a helical membrane-spanning segment. The Cytoplasmic portion of the chain corresponds to 47-54 (ATVWSERS). Residues 55-75 (LHTPMYLFLCALSVSEILYTV) form a helical membrane-spanning segment. Topologically, residues 76-99 (AIIPRMLADLLSTQRSIAFLACAS) are extracellular. Residues C97 and C189 are joined by a disulfide bond. Residues 100 to 120 (QMFFSFSFGFTHSFLLTVMGY) form a helical membrane-spanning segment. Residues 121 to 139 (DRYVAICHPLRYNVLMSPR) lie on the Cytoplasmic side of the membrane. The chain crosses the membrane as a helical span at residues 140–160 (GCACLVGCSWAGGLVMGMVVT). Topologically, residues 161-197 (SAIFHLAFCGHKEIHHFACHVPPLLKLACGDDVLVVA) are extracellular. Residues 198–218 (KGVGLVCITALLGCFLLILLS) form a helical membrane-spanning segment. At 219-238 (YAFIVAAILKIPSAEGRNKA) the chain is on the cytoplasmic side. A helical membrane pass occupies residues 239-259 (FSTCASHLTVVVVHYGFASVI). Residues 260 to 272 (YLKPKSPQSLEGD) are Extracellular-facing. A helical transmembrane segment spans residues 273-293 (TLMGITYTVLTPFLSPIIFSL). Over 294–318 (RNKELKVAMKKTFFSKLYPEKNVMM) the chain is Cytoplasmic.

It belongs to the G-protein coupled receptor 1 family.

Its subcellular location is the cell membrane. In terms of biological role, odorant receptor. The sequence is that of Olfactory receptor 10H1 (OR10H1) from Homo sapiens (Human).